A 415-amino-acid polypeptide reads, in one-letter code: Serine/threonine transporter SstT (415 aa).

A run of 8 helical transmembrane segments spans residues 21 to 41, 45 to 65, 85 to 105, 142 to 162, 193 to 213, 217 to 237, 289 to 309, and 331 to 351; these read ILLG…AALA, LGTL…LVLV, FLYL…SVLF, ALLN…GIAF, LGIF…ALWG, LLMV…PLIV, VAIP…ITVL, and VVAS…LLLI.

This sequence belongs to the dicarboxylate/amino acid:cation symporter (DAACS) (TC 2.A.23) family.

The protein localises to the cell inner membrane. The catalysed reaction is L-serine(in) + Na(+)(in) = L-serine(out) + Na(+)(out). It carries out the reaction L-threonine(in) + Na(+)(in) = L-threonine(out) + Na(+)(out). In terms of biological role, involved in the import of serine and threonine into the cell, with the concomitant import of sodium (symport system). This is Serine/threonine transporter SstT from Pectobacterium atrosepticum (strain SCRI 1043 / ATCC BAA-672) (Erwinia carotovora subsp. atroseptica).